The sequence spans 318 residues: Protein-L-histidine N-pros-methyltransferase (318 aa).

The signal sequence occupies residues 1-18; the sequence is MRLLAGWLCLSLASVWLA. A glycan (N-linked (GlcNAc...) asparagine) is linked at Asn-35. Residues Glu-174, Asn-210, and Tyr-295 each coordinate S-adenosyl-L-homocysteine.

It belongs to the METTL9 family.

Its subcellular location is the endoplasmic reticulum. It is found in the mitochondrion. The enzyme catalyses L-histidyl-[protein] + S-adenosyl-L-methionine = N(pros)-methyl-L-histidyl-[protein] + S-adenosyl-L-homocysteine + H(+). Protein-histidine N-methyltransferase that specifically catalyzes 1-methylhistidine (pros-methylhistidine) methylation of target proteins. Specifically methylates the second His of proteins with a His-x-His (HxH) motif (where 'x' is preferably a small amino acid), while exploiting the first one as a recognition signature. Catalyzes methylation of target proteins such as S100A9, NDUFB3, SLC39A5, SLC39A7, ARMC6 and DNAJB12; 1-methylhistidine modification may affect the binding of zinc and other metals to its target proteins. Constitutes the main methyltransferase for the 1-methylhistidine modification in cell. The sequence is that of Protein-L-histidine N-pros-methyltransferase from Homo sapiens (Human).